The sequence spans 342 residues: Anthranilate phosphoribosyltransferase (342 aa).

5-phospho-alpha-D-ribose 1-diphosphate-binding positions include Gly-81, Gly-84 to Asp-85, Asn-91 to Ser-94, Lys-109 to Ser-117, and Ser-121. Anthranilate is bound at residue Gly-81. Ser-93 serves as a coordination point for Mg(2+). Asn-112 provides a ligand contact to anthranilate. Position 167 (Arg-167) interacts with anthranilate. Mg(2+) is bound by residues Asp-226 and Glu-227.

It belongs to the anthranilate phosphoribosyltransferase family. As to quaternary structure, homodimer. It depends on Mg(2+) as a cofactor.

It catalyses the reaction N-(5-phospho-beta-D-ribosyl)anthranilate + diphosphate = 5-phospho-alpha-D-ribose 1-diphosphate + anthranilate. Its pathway is amino-acid biosynthesis; L-tryptophan biosynthesis; L-tryptophan from chorismate: step 2/5. Functionally, catalyzes the transfer of the phosphoribosyl group of 5-phosphorylribose-1-pyrophosphate (PRPP) to anthranilate to yield N-(5'-phosphoribosyl)-anthranilate (PRA). The sequence is that of Anthranilate phosphoribosyltransferase from Marinobacter nauticus (strain ATCC 700491 / DSM 11845 / VT8) (Marinobacter aquaeolei).